The chain runs to 470 residues: Acetyl-CoA decarbonylase/synthase complex subunit gamma 1 (470 aa).

The 4Fe-4S domain maps to 1 to 60 (MKINSPLEAYKYLPQTNCGECGQPTCMAFASTLIDRSGKTTDCPPLIKEKKFAKKLAELD). C18, C21, C26, and C43 together coordinate [4Fe-4S] cluster.

In terms of assembly, heterodimer of delta and gamma chains. The ACDS complex is made up of alpha, epsilon, beta, gamma and delta chains with a probable stoichiometry of (alpha(2)epsilon(2))(4)-beta(8)-(gamma(1)delta(1))(8). The cofactor is corrinoid. [4Fe-4S] cluster serves as cofactor.

The enzyme catalyses 5,6,7,8-tetrahydrosarcinapterin + methyl-Co(III)-[corrinoid Fe-S protein] = 5-methyltetrahydrosarcinapterin + Co(I)-[corrinoid Fe-S protein] + H(+). Its pathway is one-carbon metabolism; methanogenesis from acetate. Part of a complex that catalyzes the reversible cleavage of acetyl-CoA, allowing growth on acetate as sole source of carbon and energy. The protein is Acetyl-CoA decarbonylase/synthase complex subunit gamma 1 of Methanosarcina mazei (strain ATCC BAA-159 / DSM 3647 / Goe1 / Go1 / JCM 11833 / OCM 88) (Methanosarcina frisia).